The sequence spans 273 residues: MKKSGKWFSLAAALSVTAIVGAGCSMSNGDAQKDTKTTAETKQTEQKTADSKKSNTQNSEFSLESQYFNDIKKVDGLETIQNPENILALVNKQYALPGNYEPSDLVIPDVEFSFEEKIQKRYIRKEAADALKTMFDAAKKEGYELAAVSGYRSYDRQKVIFDNEVSLKGERKAKEAVAYPGESEHQTGLAMDISSRSNGFELNEAFGSTADGKWVQDNAYKYGFIIRYPKNKEDITKYEYEPWHLRYVGKKAAKVIQDNDLTLEEYFEKVKKI.

The signal sequence occupies residues 1-23 (MKKSGKWFSLAAALSVTAIVGAG). A lipid anchor (N-palmitoyl cysteine) is attached at Cys24. A lipid anchor (S-diacylglycerol cysteine) is attached at Cys24. The disordered stretch occupies residues 27–58 (SNGDAQKDTKTTAETKQTEQKTADSKKSNTQN). Basic and acidic residues predominate over residues 31–53 (AQKDTKTTAETKQTEQKTADSKK).

Belongs to the peptidase M15B family.

The protein resides in the cell membrane. This is Putative carboxypeptidase YodJ (yodJ) from Bacillus subtilis (strain 168).